The sequence spans 709 residues: Polyribonucleotide nucleotidyltransferase (709 aa).

Residues D491 and D497 each contribute to the Mg(2+) site. A KH domain is found at 557 to 617 (PKSESFMIPP…ENLQKAKTFI (61 aa)). Residues 641-709 (GERFVGKIKK…KNKVELGLVE (69 aa)) enclose the S1 motif domain.

It belongs to the polyribonucleotide nucleotidyltransferase family. It depends on Mg(2+) as a cofactor.

The protein localises to the cytoplasm. It catalyses the reaction RNA(n+1) + phosphate = RNA(n) + a ribonucleoside 5'-diphosphate. Functionally, involved in mRNA degradation. Catalyzes the phosphorolysis of single-stranded polyribonucleotides processively in the 3'- to 5'-direction. This is Polyribonucleotide nucleotidyltransferase from Helicobacter hepaticus (strain ATCC 51449 / 3B1).